The chain runs to 324 residues: Mitochondrial oxaloacetate transport protein (324 aa).

3 Solcar repeats span residues 20 to 111, 126 to 218, and 227 to 312; these read ISKF…IRSS, QSVG…AKNI, and DGPA…TMKL. The next 6 membrane-spanning stretches (helical) occupy residues 26–46, 79–99, 132–152, 193–213, 233–253, and 284–305; these read FVAG…IELI, GIKG…GLNG, VFSG…LFLV, GIDA…PIYN, LTAS…WDVI, and LYKG…CLTF.

Belongs to the mitochondrial carrier (TC 2.A.29) family.

It is found in the mitochondrion inner membrane. It carries out the reaction a dicarboxylate(in) + sulfate(out) = a dicarboxylate(out) + sulfate(in). The catalysed reaction is (2S)-2-isopropylmalate(in) + sulfate(out) = (2S)-2-isopropylmalate(out) + sulfate(in). It catalyses the reaction (2R,3S)-3-isopropylmalate(in) + sulfate(out) = (2R,3S)-3-isopropylmalate(out) + sulfate(in). The enzyme catalyses malonate(in) + sulfate(out) = malonate(out) + sulfate(in). It carries out the reaction oxaloacetate(in) + sulfate(out) = oxaloacetate(out) + sulfate(in). The catalysed reaction is thiosulfate(in) + sulfate(out) = thiosulfate(out) + sulfate(in). With respect to regulation, inhibited by alpha-keto isocaproate, an intermediate of leucine biosynthesis pathway. Functionally, antiporter that exchanges dicarboxylates and sulfur oxoanions across the inner membrane of mitochondria. Exports alpha-isopropylmalate from mitochondrial matrix to the cytosol, where it serves as a precursor for leucine biosynthesis. This Saccharomyces cerevisiae (strain ATCC 204508 / S288c) (Baker's yeast) protein is Mitochondrial oxaloacetate transport protein (OAC1).